A 1779-amino-acid chain; its full sequence is 6-methylsalicylic acid synthase (1779 aa).

Residues 1–11 (MSASRSSTKFS) are compositionally biased toward polar residues. Residues 1 to 40 (MSASRSSTKFSTPAEGSDNGKEFTTPATSTEGHEVPDRPG) form a disordered region. Residues 31–40 (EGHEVPDRPG) show a composition bias toward basic and acidic residues. The 430-residue stretch at 43-472 (LADVAIIGMA…GTVSHAVLEA (430 aa)) folds into the Ketosynthase family 3 (KS3) domain. Catalysis depends on for beta-ketoacyl synthase activity residues cysteine 215, histidine 350, and histidine 392. The segment at 586-883 (WIFSGHGAQW…TPTMVRRQPA (298 aa)) is malonyl-CoA:ACP transacylase (MAT) domain. Serine 672 acts as the For acyl/malonyl transferase activity in catalysis. Positions 942–1218 (THDPAANNLL…SFAGLEGESF (277 aa)) are product template (PT) domain. The interval 948 to 1064 (NNLLGKRIAL…AAVGAANVVP (117 aa)) is N-terminal hotdog fold. Residues 948 to 1219 (NNLLGKRIAL…FAGLEGESFS (272 aa)) enclose the PKS/mFAS DH domain. The Proton acceptor; for dehydratase activity role is filled by histidine 980. Residues 1079-1219 (PQKLADSFSI…FAGLEGESFS (141 aa)) form a C-terminal hotdog fold region. Residue aspartate 1138 is the Proton donor; for dehydratase activity of the active site. Residues 1703-1777 (QHLRDVINGC…HLVKHFTKEL (75 aa)) enclose the Carrier domain. The residue at position 1737 (serine 1737) is an O-(pantetheine 4'-phosphoryl)serine.

The enzyme catalyses 3 malonyl-CoA + acetyl-CoA + NADPH + 3 H(+) = 6-methylsalicylate + 3 CO2 + NADP(+) + 4 CoA + H2O. It functions in the pathway secondary metabolite biosynthesis; terpenoid biosynthesis. Non-reducing polyketide synthase; part of the gene cluster that mediates the biosynthesis of yanuthone D, a fungal isoprenoid epoxycyclohexenone that acts as an antibiotic against fungi and bacteria. The first step of the pathway is the synthesis of 6-methylsalicylic acid (6-MSA) by the polyketide synthase yanA. 6-MSA is then converted to m-cresol by the decarboxylase yanB. The cytochrome P450 monooxygenase yanC then catalyzes the oxidation of m-cresol to toluquinol. Epoxidation of toluquinol is then performed by the short chain dehydrogenase yanD, with the help of yanE, and a further prenylation by yanG leads to 7-deacetoxyyanuthone A. The next step is the hydroxylation of C-22 of 7-deacetoxyyanuthone A by the cytochrome P450 monooxygenase yanH to yield 22-deacetylyanuthone A. O-Mevalon transferase yanI then attaches mevalon to the hydroxyl group of 22-deacetylyanuthone A to produce yanuthone E. Finally, the FAD-dependent monooxygenase yanF oxidizes the hydroxyl group at C15 of yanuthone E to form yanuthone D. Furthermore, several branching points in the pathway lead to the production of yanuthones F and G from 7-deacetoxyyanuthone A; yanuthones H and I from 22-deacetylyanuthone A; and yanuthone J from yanuthone E. This Aspergillus niger (strain ATCC 1015 / CBS 113.46 / FGSC A1144 / LSHB Ac4 / NCTC 3858a / NRRL 328 / USDA 3528.7) protein is 6-methylsalicylic acid synthase.